Consider the following 142-residue polypeptide: 3-hydroxyacyl-[acyl-carrier-protein] dehydratase FabZ (142 aa).

His48 is a catalytic residue.

Belongs to the thioester dehydratase family. FabZ subfamily.

It is found in the cytoplasm. The catalysed reaction is a (3R)-hydroxyacyl-[ACP] = a (2E)-enoyl-[ACP] + H2O. Involved in unsaturated fatty acids biosynthesis. Catalyzes the dehydration of short chain beta-hydroxyacyl-ACPs and long chain saturated and unsaturated beta-hydroxyacyl-ACPs. This Ruminiclostridium cellulolyticum (strain ATCC 35319 / DSM 5812 / JCM 6584 / H10) (Clostridium cellulolyticum) protein is 3-hydroxyacyl-[acyl-carrier-protein] dehydratase FabZ.